The primary structure comprises 278 residues: Undecaprenyl-diphosphatase 1 (278 aa).

7 consecutive transmembrane segments (helical) span residues 46–66 (VVGFTAVIQVGAIAAVLVYFF), 91–111 (YTFTWWVIYATIPVVLVGLAA), 119–139 (LASLWVVAASLLAGSALMWFA), 153–173 (SLPDAMIVGTSQILALLFPGF), 191–211 (VAATRLSFFLSIPALTGAGLY), 225–245 (PLAVGTVVSFFVAYASIAWLL), and 256–276 (FIIYRVAVAVLLAGLLAGGAI).

This sequence belongs to the UppP family.

The protein localises to the cell membrane. It catalyses the reaction di-trans,octa-cis-undecaprenyl diphosphate + H2O = di-trans,octa-cis-undecaprenyl phosphate + phosphate + H(+). Functionally, catalyzes the dephosphorylation of undecaprenyl diphosphate (UPP). Confers resistance to bacitracin. This is Undecaprenyl-diphosphatase 1 from Frankia alni (strain DSM 45986 / CECT 9034 / ACN14a).